The sequence spans 472 residues: Cysteine--tRNA ligase (472 aa).

Residue cysteine 29 participates in Zn(2+) binding. A 'HIGH' region motif is present at residues 31 to 41 (PTVYDFAHIGN). Residues cysteine 227, histidine 252, and glutamate 256 each coordinate Zn(2+). The 'KMSKS' region signature appears at 285–289 (KMSKS). ATP is bound at residue lysine 288.

This sequence belongs to the class-I aminoacyl-tRNA synthetase family. Monomer. Requires Zn(2+) as cofactor.

It localises to the cytoplasm. It catalyses the reaction tRNA(Cys) + L-cysteine + ATP = L-cysteinyl-tRNA(Cys) + AMP + diphosphate. This Bradyrhizobium sp. (strain BTAi1 / ATCC BAA-1182) protein is Cysteine--tRNA ligase.